The chain runs to 667 residues: E3 ubiquitin-protein ligase Midline-1 (667 aa).

An RING-type zinc finger spans residues 10–60; that stretch reads CPICLELFEDPLLLPCAHSLCFNCAHRILVSHCATNEPVESINAFQCPTCR. Phosphoserine is present on residues S92 and S96. B box-type zinc fingers lie at residues 116–165 and 172–212; these read KVLC…IEPI and GLMC…VAAL. C119, C122, C134, C137, C142, C145, H150, H159, C175, H178, C198, and H204 together coordinate Zn(2+). Residues 205–264 are a coiled coil; it reads RDHQVAALSERYDKLKQNLESNLTNLIKRNTELETLLAKLIQTCQHVEVNASRQEAKLTE. Positions 320–379 constitute a COS domain; sequence LKENDHARFLQTAKNITERVSMATASSQVLIPEINLNDTFDTFALDFSREKKLLECLDYL. The region spanning 381–484 is the Fibronectin type-III domain; that stretch reads APNPPTIREE…EPGKLKTNSQ (104 aa). Residues 471-485 are compositionally biased toward polar residues; that stretch reads SRSSEPGKLKTNSQP. The interval 471–524 is disordered; the sequence is SRSSEPGKLKTNSQPFKLDPKSAHRKLKVSHDNLTVERDESSSKKSHTPERFTS. Residues 482-659 enclose the B30.2/SPRY domain; sequence NSQPFKLDPK…IITGLPIPDH (178 aa). The segment covering 499 to 520 has biased composition (basic and acidic residues); the sequence is VSHDNLTVERDESSSKKSHTPE. S511 bears the Phosphoserine mark.

It belongs to the TRIM/RBCC family. In terms of assembly, homodimer or heterodimer with MID2. Interacts with IGBP1.

It localises to the cytoplasm. The protein resides in the cytoskeleton. The enzyme catalyses S-ubiquitinyl-[E2 ubiquitin-conjugating enzyme]-L-cysteine + [acceptor protein]-L-lysine = [E2 ubiquitin-conjugating enzyme]-L-cysteine + N(6)-ubiquitinyl-[acceptor protein]-L-lysine.. Has E3 ubiquitin ligase activity towards IGBP1, promoting its monoubiquitination, which results in deprotection of the catalytic subunit of protein phosphatase PP2A, and its subsequent degradation by polyubiquitination. The chain is E3 ubiquitin-protein ligase Midline-1 (Mid1) from Rattus norvegicus (Rat).